Reading from the N-terminus, the 92-residue chain is Small ribosomal subunit protein uS19c (92 aa).

Belongs to the universal ribosomal protein uS19 family.

The protein localises to the plastid. It localises to the chloroplast. Protein S19 forms a complex with S13 that binds strongly to the 16S ribosomal RNA. This chain is Small ribosomal subunit protein uS19c, found in Vitis vinifera (Grape).